A 538-amino-acid polypeptide reads, in one-letter code: Probable ribonuclease 3 (538 aa).

RNase III domains follow at residues 24 to 149 (IKSY…LNFG) and 238 to 381 (ASQM…EGYL). In terms of domain architecture, DRBM spans 408 to 477 (LISQNIEVLH…NYKDLILQLY (70 aa)).

Belongs to the ribonuclease III family.

It catalyses the reaction Endonucleolytic cleavage to 5'-phosphomonoester.. In terms of biological role, digests double-stranded RNA. This Acanthamoeba polyphaga (Amoeba) protein is Probable ribonuclease 3.